A 326-amino-acid chain; its full sequence is Interleukin-1-binding protein (326 aa).

The signal sequence occupies residues 1 to 18; it reads MSILPVIFLSIFFYSSFV. 3 consecutive Ig-like domains span residues 24-115, 122-212, and 221-322; these read PECI…LNLT, SNID…RIVK, and PSTM…KTVT. C48 and C99 are oxidised to a cystine. Residues N80, N103, and N113 are each glycosylated (N-linked (GlcNAc...) asparagine; by host). An intrachain disulfide couples C143 to C194. Residues N206 and N237 are each glycosylated (N-linked (GlcNAc...) asparagine; by host). C242 and C309 form a disulfide bridge.

This sequence belongs to the interleukin-1 receptor family. Interacts with mouse Il1b.

The protein resides in the secreted. May reduce the host inflammatory response by interacting with inteleukin-1 beta (Il1b) and thus decreasing the association between IL1B and its cellular receptor. In Vaccinia virus (strain Ankara) (VACV), this protein is Interleukin-1-binding protein (OPG201).